The following is a 1076-amino-acid chain: Isoleucine--tRNA ligase (1076 aa).

Residues 47–57 (PYTTGQIHLGT) carry the 'HIGH' region motif. The 'KMSKS' region signature appears at 591-595 (KMSKS). Lysine 594 serves as a coordination point for ATP.

This sequence belongs to the class-I aminoacyl-tRNA synthetase family. IleS type 2 subfamily. As to quaternary structure, monomer. The cofactor is Zn(2+).

Its subcellular location is the cytoplasm. The catalysed reaction is tRNA(Ile) + L-isoleucine + ATP = L-isoleucyl-tRNA(Ile) + AMP + diphosphate. In terms of biological role, catalyzes the attachment of isoleucine to tRNA(Ile). As IleRS can inadvertently accommodate and process structurally similar amino acids such as valine, to avoid such errors it has two additional distinct tRNA(Ile)-dependent editing activities. One activity is designated as 'pretransfer' editing and involves the hydrolysis of activated Val-AMP. The other activity is designated 'posttransfer' editing and involves deacylation of mischarged Val-tRNA(Ile). The protein is Isoleucine--tRNA ligase of Methanoregula boonei (strain DSM 21154 / JCM 14090 / 6A8).